Reading from the N-terminus, the 895-residue chain is Clathrin interactor EPSIN 2 (895 aa).

The ENTH domain maps to Lys18–Arg150. 3 stretches are compositionally biased toward basic and acidic residues: residues Arg150 to Arg161, Asp177 to Ser236, and Arg245 to Ser257. The segment at Arg150 to Thr396 is disordered. 2 positions are modified to phosphoserine: Ser270 and Ser282. Low complexity predominate over residues Ala329–Thr348. 2 stretches are compositionally biased toward polar residues: residues Phe349–Val358 and Pro387–Thr396. A Clathrin binding motif is present at residues Leu409–Phe413. Disordered regions lie at residues Ala436–Gln533 and Lys758–Gly784. A compositionally biased stretch (low complexity) spans Pro440–Asp454. An ALPHA-ADR binding motif is present at residues Asp454–Phe456. Polar residues-rich tracts occupy residues Phe464–Ala479, Pro515–Gln533, and Gln759–Asn769.

The protein belongs to the epsin family. As to quaternary structure, interacts with clathrin, VTI12, DELTA-ADR and ALPHA-ADR.

The protein resides in the golgi apparatus. It localises to the cytoplasmic vesicle. Its subcellular location is the clathrin-coated vesicle. In terms of biological role, may have a role in transport via clathrin-coated vesicles from the trans-Golgi network to endosomes. Stimulates clathrin assembly. Binds to membranes enriched in phosphatidylinositol 3-phosphate (PtdIns(3)P). Plays an important role in protein trafficking. In Arabidopsis thaliana (Mouse-ear cress), this protein is Clathrin interactor EPSIN 2 (EPSIN2).